Reading from the N-terminus, the 263-residue chain is MPEGPEIRRAADNLEAAIKGKPLTDVWFAFPQLKTYQSQLIGQHVTHVETRGKALLTHFSNDLTLYSHNQLYGVWRVVDTGEEPQTTRVLRVKLQTADKTILLYSASDIEMLRPEQLTTHPFLQRVGPDVLDPNLTPEVVKERLLSPRFRNRQFAGLLLDQAFLAGLGNYLRVEILWQVGLTGNHKAKDLNAAQLDALAHALLDIPRFSYATRGLVDENKHHGALFRFKVFHRDGEPCERCGSIIEKTTLSSRPFYWCPGCQH.

Catalysis depends on Pro2, which acts as the Schiff-base intermediate with DNA. Glu3 functions as the Proton donor in the catalytic mechanism. Lys53 functions as the Proton donor; for beta-elimination activity in the catalytic mechanism. Positions 70, 125, and 169 each coordinate DNA. The FPG-type zinc-finger motif lies at 229–263 (KVFHRDGEPCERCGSIIEKTTLSSRPFYWCPGCQH). Arg253 serves as the catalytic Proton donor; for delta-elimination activity.

This sequence belongs to the FPG family. Zn(2+) serves as cofactor.

It carries out the reaction 2'-deoxyribonucleotide-(2'-deoxyribose 5'-phosphate)-2'-deoxyribonucleotide-DNA = a 3'-end 2'-deoxyribonucleotide-(2,3-dehydro-2,3-deoxyribose 5'-phosphate)-DNA + a 5'-end 5'-phospho-2'-deoxyribonucleoside-DNA + H(+). In terms of biological role, involved in base excision repair of DNA damaged by oxidation or by mutagenic agents. Acts as a DNA glycosylase that recognizes and removes damaged bases. Has a preference for oxidized pyrimidines, such as thymine glycol, 5,6-dihydrouracil and 5,6-dihydrothymine. Has AP (apurinic/apyrimidinic) lyase activity and introduces nicks in the DNA strand. Cleaves the DNA backbone by beta-delta elimination to generate a single-strand break at the site of the removed base with both 3'- and 5'-phosphates. This is Endonuclease 8 from Shigella sonnei (strain Ss046).